Consider the following 930-residue polypeptide: Polypeptide N-acetylgalactosaminyltransferase 5 (930 aa).

Topologically, residues 1-12 (MNKIRKFFRGSG) are cytoplasmic. A helical; Signal-anchor for type II membrane protein membrane pass occupies residues 13–35 (RVLAFIFAASVIWLLFDMAALRL). The Lumenal portion of the chain corresponds to 36 to 930 (SFSEINAGLL…KWKFEKYYEV (895 aa)). A disordered region spans residues 190–209 (KQEAPQNYNVSSDTSKQASE). Over residues 193–209 (APQNYNVSSDTSKQASE) the composition is skewed to polar residues. Residues asparagine 198, asparagine 213, and asparagine 283 are each glycosylated (N-linked (GlcNAc...) asparagine). At serine 285 the chain carries Phosphoserine. Asparagine 287, asparagine 309, asparagine 355, and asparagine 387 each carry an N-linked (GlcNAc...) asparagine glycan. The segment at 327–381 (DTKEVPNSKTQTVFPKLLGGSPHKQIPRNQSKTSSSPPALKKAVSQSKPTISGGL) is disordered. A compositionally biased stretch (polar residues) spans 353–363 (PRNQSKTSSSP). 3 disulfide bridges follow: cysteine 476–cysteine 708, cysteine 699–cysteine 779, and cysteine 812–cysteine 825. Residues 485–594 (LPTTSIIMCF…VGWLEPLLER (110 aa)) are catalytic subdomain A. Substrate-binding residues include aspartate 526 and arginine 555. Asparagine 568 carries an N-linked (GlcNAc...) asparagine glycan. Aspartate 578 provides a ligand contact to Mn(2+). Serine 579 contacts substrate. A Mn(2+)-binding site is contributed by histidine 580. The tract at residues 654-716 (IIRCPVMAGG…PCSRVGHIFR (63 aa)) is catalytic subdomain B. Tryptophan 685 lines the substrate pocket. Position 713 (histidine 713) interacts with Mn(2+). The substrate site is built by arginine 716 and tyrosine 721. 3 N-linked (GlcNAc...) asparagine glycosylation sites follow: asparagine 766, asparagine 817, and asparagine 835. The Ricin B-type lectin domain occupies 794–925 (KAPVVRASGV…MELQQKWKFE (132 aa)). Cystine bridges form between cysteine 848/cysteine 863 and cysteine 898/cysteine 913. An N-linked (GlcNAc...) asparagine glycan is attached at asparagine 902.

The protein belongs to the glycosyltransferase 2 family. GalNAc-T subfamily. As to quaternary structure, interacts with EXT2. Does not interact with EXT1, EXTL1 or EXTL3. It depends on Mn(2+) as a cofactor. Expressed at low level. Not expressed before E7.5 during embryogenesis. Expressed in dental mesenchyme and tongue. Accumulates in a subset of mesenchymal cells at the ventral-most portions of the 12.5 dpc maxilla and mandible underlying the dental lamina.

Its subcellular location is the golgi apparatus membrane. It catalyses the reaction L-seryl-[protein] + UDP-N-acetyl-alpha-D-galactosamine = a 3-O-[N-acetyl-alpha-D-galactosaminyl]-L-seryl-[protein] + UDP + H(+). It carries out the reaction L-threonyl-[protein] + UDP-N-acetyl-alpha-D-galactosamine = a 3-O-[N-acetyl-alpha-D-galactosaminyl]-L-threonyl-[protein] + UDP + H(+). The protein operates within protein modification; protein glycosylation. Functionally, catalyzes the initial reaction in O-linked oligosaccharide biosynthesis, the transfer of an N-acetyl-D-galactosamine residue to a serine or threonine residue on the protein receptor. Has activity toward EA2 peptide substrate, but has a weak activity toward Muc2 or Muc1b substrates. In Mus musculus (Mouse), this protein is Polypeptide N-acetylgalactosaminyltransferase 5 (Galnt5).